A 342-amino-acid chain; its full sequence is Ribosomal RNA small subunit methyltransferase C (342 aa).

It belongs to the methyltransferase superfamily. RsmC family. In terms of assembly, monomer.

It is found in the cytoplasm. It catalyses the reaction guanosine(1207) in 16S rRNA + S-adenosyl-L-methionine = N(2)-methylguanosine(1207) in 16S rRNA + S-adenosyl-L-homocysteine + H(+). In terms of biological role, specifically methylates the guanine in position 1207 of 16S rRNA in the 30S particle. The polypeptide is Ribosomal RNA small subunit methyltransferase C (Shewanella loihica (strain ATCC BAA-1088 / PV-4)).